Here is an 862-residue protein sequence, read N- to C-terminus: MASRGGGGGGDGNSPPPSVSSPDVRPSSPLPATNSSPPQSGRRGGGRRRRGSASPYPSSPSLGGFETPPHPGRRTPSGGAAARQQRQNWTGGRFPPTPSTPMSTDDVPLSSEAGDEDTPETDGGGGGGAGADATPVFVWGTNISVQDVNAAILRFLRHFRDPRDAGRVDPVMDEGKYMRAIHRILELEGGESLDVNAHDVFDHDPDLYGKMVRYPLEVLAIFDIVLMDLVARIEPLFEKHIQTRIYNLKSSVCLRNLNPSDIEKMVSIKGMIIRCSSVIPELKEAVFRCLVCGFYSEPVMVDRGRVTEPHICQKEQCKATNSMTLVHNRCRFADKQIIKLQETPDEIPEGGTPHTVSVLMHDKLVDAGKPGDRVEITGIYRAMSIRVGPTQRTVKSIFKTYIDCLHIKKTDKSRLHVEDSMETDNPNANKTTEDDFLRDKVEKLKELSKLPDIYDRLTRSLAPNIWELDDVKRGLLCQLFGGNALRLPSGASFRGDINILLVGDPGTSKSQLLQYMHKLSPRGIYTSGRGSSAVGLTAYVTKDPETGETVLESGALVLSDKGVCCIDEFDKMSDNARSMLHEVMEQQTVSIAKAGIIASLNARTSVLACANPTESRYNPRLSVIDNIHLPPTLLSRFDLIYLILDKADEQTDRRLAKHIVSLHFENPNIEELEVLDLPTLVAYISYARKHIQPQLSDEAAEELTRGYVEMRKRGNSPGSRKKVITATARQIESLIRLSEALARMRFSEMVEVQDVVEAFRLLEVAMQQSATDHATGTIDMDLIMTGISASERQRRDNLVAATRNLVMEKMQLGGPSVRMIELLEEIRKQSSMEVHLHDLRGALGTLMTEGAVVIHGDSVKRV.

Residues 1–12 show a composition bias toward gly residues; that stretch reads MASRGGGGGGDG. The disordered stretch occupies residues 1–132; sequence MASRGGGGGG…GGGGGGAGAD (132 aa). 2 stretches are compositionally biased toward low complexity: residues 20-41 and 52-64; these read SSPDVRPSSPLPATNSSPPQSG and SASPYPSSPSLGG. The C4-type zinc-finger motif lies at 289–317; it reads CLVCGFYSEPVMVDRGRVTEPHICQKEQC. Residues 453-659 enclose the MCM domain; it reads IYDRLTRSLA…QTDRRLAKHI (207 aa). Position 503-510 (503-510) interacts with ATP; the sequence is GDPGTSKS. Positions 635 to 638 match the Arginine finger motif; it reads SRFD.

It belongs to the MCM family. Component of the minichromosome maintenance (MCM) complex, a heterotetramer composed of MCM2, MCM3, MCM4, MCM5, MCM6 and MCM7.

The protein localises to the nucleus. It carries out the reaction ATP + H2O = ADP + phosphate + H(+). Its function is as follows. Probable component of the MCM2-7 complex (MCM complex) that may function as a DNA helicase and which is essential to undergo a single round of replication initiation and elongation per cell cycle in eukaryotic cells. This is DNA replication licensing factor MCM4 (MCM4) from Oryza sativa subsp. japonica (Rice).